The chain runs to 418 residues: Tyrosine--tRNA ligase 1 (418 aa).

An L-tyrosine-binding site is contributed by tyrosine 34. The short motif at 39–48 (PTGDSMHIGH) is the 'HIGH' region element. Residues tyrosine 166 and glutamine 170 each contribute to the L-tyrosine site. The 'KMSKS' region motif lies at 228–232 (KFGKT). Position 231 (lysine 231) interacts with ATP. The region spanning 350-416 (KNIVDWLVDT…GKKNYFLAKV (67 aa)) is the S4 RNA-binding domain.

It belongs to the class-I aminoacyl-tRNA synthetase family. TyrS type 1 subfamily. As to quaternary structure, homodimer.

It localises to the cytoplasm. It catalyses the reaction tRNA(Tyr) + L-tyrosine + ATP = L-tyrosyl-tRNA(Tyr) + AMP + diphosphate + H(+). In terms of biological role, catalyzes the attachment of tyrosine to tRNA(Tyr) in a two-step reaction: tyrosine is first activated by ATP to form Tyr-AMP and then transferred to the acceptor end of tRNA(Tyr). The protein is Tyrosine--tRNA ligase 1 of Enterococcus faecalis (strain ATCC 700802 / V583).